The following is a 259-amino-acid chain: MADDFDTGDMFKDPEGFYPPEKEPTFAEHRMLSGQVVRVRLVGSHPLYGNMLWNAGRISSEYIETHAPTLIAGKDVLEIGAAAGVPSIVSAIMGARTTVMTDYPDPDLVDNMRQNADASASMIPTDPPSSLHVTGYKWGSDVEPLKAYLPEESRADGFDVLIMADVVYSHREHGNLVKTMQETLKRQKDAVALVIFTPYEPWLLPQTERFFPLAEQGGFTVTKVFEKLTEKLLFENDPGDERLRRTVFGYELRWKDELR.

Residues tryptophan 53, 80 to 82 (GAA), aspartate 102, tryptophan 138, and alanine 164 contribute to the S-adenosyl-L-methionine site.

This sequence belongs to the class I-like SAM-binding methyltransferase superfamily. EFM7 family.

It localises to the cytoplasm. Functionally, S-adenosyl-L-methionine-dependent protein methyltransferase that trimethylates the N-terminal glycine 'Gly-2' of elongation factor 1-alpha, before also catalyzing the mono- and dimethylation of 'Lys-3'. The sequence is that of Protein N-terminal and lysine N-methyltransferase efm7 from Emericella nidulans (strain FGSC A4 / ATCC 38163 / CBS 112.46 / NRRL 194 / M139) (Aspergillus nidulans).